Reading from the N-terminus, the 294-residue chain is Large ribosomal subunit protein uL18A (294 aa).

Residue Ser10 is modified to Phosphoserine. Tyr12 is subject to Phosphotyrosine. Ser81 is modified (phosphoserine).

It belongs to the universal ribosomal protein uL18 family. Component of the large ribosomal subunit (LSU). Mature yeast ribosomes consist of a small (40S) and a large (60S) subunit. The 40S small subunit contains 1 molecule of ribosomal RNA (18S rRNA) and 33 different proteins (encoded by 57 genes). The large 60S subunit contains 3 rRNA molecules (25S, 5.8S and 5S rRNA) and 46 different proteins (encoded by 81 genes). Component of a hexameric 5S RNP precursor complex, composed of 5S RNA, rrs1, rpf2, rpl5a/rpl5b, rpl11a/rpl11b and syo1; this complex acts as a precursor for ribosome assembly. rpl5a/rpl5b/uL18 forms a heterotrimeric complex with syo1 and rpl11a/rpl11b/uL5. Interaction of this complex with KAP104 allows the nuclear import of the heterotrimer.

The protein resides in the cytoplasm. It is found in the nucleus. Functionally, component of the ribosome, a large ribonucleoprotein complex responsible for the synthesis of proteins in the cell. The small ribosomal subunit (SSU) binds messenger RNAs (mRNAs) and translates the encoded message by selecting cognate aminoacyl-transfer RNA (tRNA) molecules. The large subunit (LSU) contains the ribosomal catalytic site termed the peptidyl transferase center (PTC), which catalyzes the formation of peptide bonds, thereby polymerizing the amino acids delivered by tRNAs into a polypeptide chain. The nascent polypeptides leave the ribosome through a tunnel in the LSU and interact with protein factors that function in enzymatic processing, targeting, and the membrane insertion of nascent chains at the exit of the ribosomal tunnel. This Schizosaccharomyces pombe (strain 972 / ATCC 24843) (Fission yeast) protein is Large ribosomal subunit protein uL18A (rpl501).